The following is a 384-amino-acid chain: Probable protein phosphatase 2C 42 (384 aa).

The PPM-type phosphatase domain maps to 58-358 (DFSMAVIQAN…DDITVIVVFL (301 aa)). The Mn(2+) site is built by D89, G90, D290, and D349.

The protein belongs to the PP2C family. Mg(2+) is required as a cofactor. It depends on Mn(2+) as a cofactor.

The enzyme catalyses O-phospho-L-seryl-[protein] + H2O = L-seryl-[protein] + phosphate. The catalysed reaction is O-phospho-L-threonyl-[protein] + H2O = L-threonyl-[protein] + phosphate. In terms of biological role, dephosphorylates and represses plasma membrane H(+)-ATPases (PM H(+)-ATPases, e.g. AHA1 and AHA2), thus influencing negatively plant growth and fitness. Promotes the apical hook maintenance of etiolated seedlings. This chain is Probable protein phosphatase 2C 42, found in Arabidopsis thaliana (Mouse-ear cress).